The sequence spans 139 residues: MSNFWLAVVSAQHVRQGVEFGIVQTNHGKPQGIRRMSPGDGLVYYSPKTSYPDGEPLKAFTAVGRIADGEPWQSDVENFKPWRRKVHYDLSTDVSLAELQPQLEFTQEANWGYQLRRGVVPITEHDFALIRQAITSTTA.

The protein belongs to the UPF0310 family.

The polypeptide is UPF0310 protein RSal33209_2865 (Renibacterium salmoninarum (strain ATCC 33209 / DSM 20767 / JCM 11484 / NBRC 15589 / NCIMB 2235)).